The chain runs to 130 residues: Small ribosomal subunit protein uS9 (130 aa).

Belongs to the universal ribosomal protein uS9 family.

The chain is Small ribosomal subunit protein uS9 from Salmonella paratyphi C (strain RKS4594).